A 117-amino-acid chain; its full sequence is MSIESEMIHVEVVYALPQEQRVLTLVVNQQATVEEIIRQSGVLEIYPEIDLGKNKVGVFSRLVKLDATVRDKDRIEIYRPLLADPKEIRRKRAEQAKESGAADPVTGGKPSPLRKAD.

The tract at residues 90–117 is disordered; it reads RKRAEQAKESGAADPVTGGKPSPLRKAD.

Belongs to the UPF0125 (RnfH) family.

This Vibrio vulnificus (strain YJ016) protein is UPF0125 protein VV0820.